We begin with the raw amino-acid sequence, 494 residues long: Zinc metalloproteinase/disintegrin (494 aa).

The first 20 residues, 1–20 (MIQVLLVTICLAVFPFQGSS), serve as a signal peptide directing secretion. The propeptide occupies 21–193 (KTLKSGNVND…KKASHLVATS (173 aa)). The Peptidase M12B domain occupies 201 to 396 (RYVQLVIVAD…HNPPCILNQA (196 aa)). 3 disulfide bridges follow: cysteine 311-cysteine 391, cysteine 351-cysteine 375, and cysteine 353-cysteine 358. Residue histidine 336 participates in Zn(2+) binding. The active site involves glutamate 337. Positions 340 and 346 each coordinate Zn(2+). Residues 410 to 431 (ELLQNSVNPCYDPVTCQPKEKE) constitute a propeptide that is removed on maturation. In terms of domain architecture, Disintegrin spans 417–478 (NPCYDPVTCQ…DCPRNPYKGE (62 aa)). 4 disulfide bridges follow: cysteine 433–cysteine 442, cysteine 438–cysteine 463, cysteine 439–cysteine 468, and cysteine 451–cysteine 470. Positions 455–457 (RGD) match the Cell attachment site motif. The propeptide occupies 482 to 494 (MEWPAPAKGSVLM).

It belongs to the venom metalloproteinase (M12B) family. P-II subfamily. P-IIa sub-subfamily. Monomer (disintegrin). Expressed by the venom gland.

It is found in the secreted. Functionally, impairs hemostasis in the envenomed animal. Inhibits ADP-induced platelet aggregation (IC(50)=168 nM). Inhibits alpha-5/beta-1 (ITGA5/ITGB1) integrin and induces the expression of a ligand-induced binding site epitope on beta-1 integrin subunit. Has a direct chemotactic stimulus on human neutrophils in vitro. The sequence is that of Zinc metalloproteinase/disintegrin from Echis ocellatus (Ocellated saw-scaled viper).